The primary structure comprises 789 residues: Polyribonucleotide nucleotidyltransferase (789 aa).

2 residues coordinate Mg(2+): Asp494 and Asp500. Residues 561–620 (PRIESIFINKDKIRNVIGSGGKNIREICEKTGARVEIMQDGTVMIYAINNDAVEYAKNMI) enclose the KH domain. Positions 630–697 (GKVFDGTVIE…DREYVQLSMR (68 aa)) constitute an S1 motif domain. The interval 709 to 789 (GELYNIRKTN…NEVPRKPRFF (81 aa)) is disordered. Positions 737 to 749 (SEKKRRGSGRSRR) are enriched in basic residues. A compositionally biased stretch (low complexity) spans 763-780 (NNGFGNGNRSFNDNRNGN).

This sequence belongs to the polyribonucleotide nucleotidyltransferase family. Mg(2+) serves as cofactor.

It is found in the cytoplasm. The catalysed reaction is RNA(n+1) + phosphate = RNA(n) + a ribonucleoside 5'-diphosphate. Functionally, involved in mRNA degradation. Catalyzes the phosphorolysis of single-stranded polyribonucleotides processively in the 3'- to 5'-direction. This Ehrlichia ruminantium (strain Welgevonden) protein is Polyribonucleotide nucleotidyltransferase.